The following is a 253-amino-acid chain: Putative cysteine-rich repeat secretory protein 33 (253 aa).

Positions 1 to 28 (MFSSYSLCKCLVSFHILAIQVLISCASS) are cleaved as a signal peptide. Gnk2-homologous domains lie at 34–133 (EYLN…MIND) and 141–250 (YDNI…LYPF).

This sequence belongs to the cysteine-rich repeat secretory protein family.

The protein resides in the secreted. In Arabidopsis thaliana (Mouse-ear cress), this protein is Putative cysteine-rich repeat secretory protein 33 (CRRSP33).